The chain runs to 852 residues: Aconitate hydratase B (852 aa).

Substrate-binding positions include Arg-194, 237–239, 405–407, and Ser-489; these read SSR and QDT. 3 residues coordinate [4Fe-4S] cluster: Cys-708, Cys-766, and Cys-769. Substrate contacts are provided by Arg-788 and Arg-793.

This sequence belongs to the aconitase/IPM isomerase family. In terms of assembly, monomer. [4Fe-4S] cluster is required as a cofactor.

The catalysed reaction is citrate = D-threo-isocitrate. It catalyses the reaction (2S,3R)-3-hydroxybutane-1,2,3-tricarboxylate = 2-methyl-cis-aconitate + H2O. It participates in carbohydrate metabolism; tricarboxylic acid cycle; isocitrate from oxaloacetate: step 2/2. Its pathway is organic acid metabolism; propanoate degradation. In terms of biological role, involved in the catabolism of short chain fatty acids (SCFA) via the tricarboxylic acid (TCA)(acetyl degradation route) and probably via the 2-methylcitrate cycle I (propionate degradation route). Catalyzes the reversible isomerization of citrate to isocitrate via cis-aconitate. Catalyzes the hydration of 2-methyl-cis-aconitate to yield (2R,3S)-2-methylisocitrate. The apo form of AcnB functions as a RNA-binding regulatory protein. The chain is Aconitate hydratase B (acnB) from Helicobacter pylori (strain J99 / ATCC 700824) (Campylobacter pylori J99).